We begin with the raw amino-acid sequence, 209 residues long: Kunitz trypsin inhibitor 1 (209 aa).

The first 22 residues, 1–22, serve as a signal peptide directing secretion; sequence MKATISITTIFLVVALAAPSLA. Cystine bridges form between Cys-63-Cys-107 and Cys-154-Cys-162. N-linked (GlcNAc...) asparagine glycosylation is present at Asn-156.

This sequence belongs to the protease inhibitor I3 (leguminous Kunitz-type inhibitor) family.

In terms of biological role, exhibits Kunitz trypsin protease inhibitor activity. In Arabidopsis thaliana (Mouse-ear cress), this protein is Kunitz trypsin inhibitor 1.